The primary structure comprises 111 residues: SPbeta prophage-derived uncharacterized protein YopW (111 aa).

The chain is SPbeta prophage-derived uncharacterized protein YopW (yopW) from Bacillus subtilis (strain 168).